The sequence spans 355 residues: S-adenosylmethionine:tRNA ribosyltransferase-isomerase (355 aa).

This sequence belongs to the QueA family. Monomer.

Its subcellular location is the cytoplasm. The enzyme catalyses 7-aminomethyl-7-carbaguanosine(34) in tRNA + S-adenosyl-L-methionine = epoxyqueuosine(34) in tRNA + adenine + L-methionine + 2 H(+). It functions in the pathway tRNA modification; tRNA-queuosine biosynthesis. Functionally, transfers and isomerizes the ribose moiety from AdoMet to the 7-aminomethyl group of 7-deazaguanine (preQ1-tRNA) to give epoxyqueuosine (oQ-tRNA). The polypeptide is S-adenosylmethionine:tRNA ribosyltransferase-isomerase (Burkholderia orbicola (strain MC0-3)).